The following is a 409-amino-acid chain: MTKVLVLGGRFGALTAAYTLKRLVGSKADVKVINKSRFSYFRPALPHVAIGVRDVDELKVDLSEALPEKGIQFQEGTVEKIDAKSSMVYYTKPDGSMAEEEYDYVIVGIGAHLATELVKGWDKYGYSVCEPEFATKLREKLESFQGGNIAIGSGPFYQGHNPKPKVPENFVPNADSACEGPVFEMSLMLHGYFKKKGMLDKVHVTVFSPGEYLSDLSPNSRKAVASIYNQLGIKLVHNFKIKEIREHEIVDEKGNTIPADITILLPPYTGNPALKNSTPDLVDDGGFIPTDLNMVSIKYDNVYAVGDANSMTVPKLGYLAVMTGRIAAQHLANRLGVPTKVDKYYPTIMCVADNPYEGYAVSVKDDTWYGGTVSIADPAAVNHLKKELFTKYYMWTKGDMALEKFLASW.

Residues 8–12 (GGRFG), 34–35 (NK), and Cys129 contribute to the FAD site. Catalysis depends on Cys178, which acts as the Cysteine persulfide intermediate. Residues Asn271, Asp307, and Gly317 each coordinate FAD. Cys350 serves as the catalytic Cysteine persulfide intermediate.

The protein belongs to the SQRD family. As to quaternary structure, monomer. FAD serves as cofactor.

It localises to the membrane. The catalysed reaction is n a quinone + n hydrogen sulfide + n H(+) = polysulfur(n-2) + n a quinol. Its activity is regulated as follows. Inhibited by the quinone analog 2-heptyl-4-hydroxyquinolone N-oxide (HQNO). Inactivated by iodoacetamide treatment. Inhibited by KCN. In terms of biological role, catalyzes the oxidation of sulfides, such as hydrogen sulfide, with the help of a quinone. Has the highest activity with caldariella quinone and decylubiquinone, and lower activity with naphtoquinones. Consecutive reaction cycles lead to the accumulation of a polysulfide product on the active site Cys residues; these products are released when they exceed a critical length, typically as cyclooctasulfur. The chain is Sulfide-quinone reductase from Acidianus ambivalens (Desulfurolobus ambivalens).